The primary structure comprises 73 residues: Translation initiation factor IF-1 (73 aa).

One can recognise an S1-like domain in the interval Met1–Lys73.

The protein belongs to the IF-1 family. In terms of assembly, component of the 30S ribosomal translation pre-initiation complex which assembles on the 30S ribosome in the order IF-2 and IF-3, IF-1 and N-formylmethionyl-tRNA(fMet); mRNA recruitment can occur at any time during PIC assembly.

It localises to the cytoplasm. In terms of biological role, one of the essential components for the initiation of protein synthesis. Stabilizes the binding of IF-2 and IF-3 on the 30S subunit to which N-formylmethionyl-tRNA(fMet) subsequently binds. Helps modulate mRNA selection, yielding the 30S pre-initiation complex (PIC). Upon addition of the 50S ribosomal subunit IF-1, IF-2 and IF-3 are released leaving the mature 70S translation initiation complex. This chain is Translation initiation factor IF-1, found in Streptomyces coelicolor (strain ATCC BAA-471 / A3(2) / M145).